The primary structure comprises 2221 residues: Voltage-dependent L-type calcium channel subunit alpha-1C (2221 aa).

Residues 1–20 (MVNENTRMYIPEENHQGSNY) are disordered. Topologically, residues 1-124 (MVNENTRMYI…RACISIVEWK (124 aa)) are cytoplasmic. The tract at residues 47 to 68 (GAALSWQAAIDAARQAKLMGSA) is calmodulin-binding. The tract at residues 73 to 98 (ISTVSSTQRKRQQYGKPKKQGSTTAT) is disordered. Basic residues predominate over residues 80–91 (QRKRQQYGKPKK). One copy of the I repeat lies at 111-408 (NPIRRACISI…LVLGVLSGEF (298 aa)). A helical transmembrane segment spans residues 125 to 143 (PFEIIILLTIFANCVALAI). Residues 144 to 158 (YIPFPEDDSNATNSN) lie on the Extracellular side of the membrane. N-linked (GlcNAc...) asparagine glycosylation occurs at asparagine 153. A helical transmembrane segment spans residues 159-179 (LERVEYLFLIIFTVEAFLKVI). Over 180–188 (AYGLLFHPN) the chain is Cytoplasmic. A helical membrane pass occupies residues 189 to 209 (AYLRNGWNLLDFIIVVVGLFS). The Extracellular portion of the chain corresponds to 210-232 (AILEQATKADGANALGGKGAGFD). Residues 233 to 251 (VKALRAFRVLRPLRLVSGV) traverse the membrane as a helical segment. Residues 252-268 (PSLQVVLNSIIKAMVPL) lie on the Cytoplasmic side of the membrane. The chain crosses the membrane as a helical span at residues 269–290 (LHIALLVLFVIIIYAIIGLELF). The Extracellular segment spans residues 291–350 (MGKMHKTCYNQEGIADVPAEDDPSPCALETGHGRQCQNGTVCKPGWDGPKHGITNFDNFA). Cystine bridges form between cysteine 298-cysteine 326 and cysteine 316-cysteine 332. N-linked (GlcNAc...) asparagine glycosylation occurs at asparagine 328. The segment at residues 351-372 (FAMLTVFQCITMEGWTDVLYWV) is an intramembrane region (pore-forming). Positions 361 to 364 (TMEG) match the Selectivity filter of repeat I motif. Glutamate 363 lines the Ca(2+) pocket. Over 373–380 (NDAVGRDW) the chain is Extracellular. The chain crosses the membrane as a helical span at residues 381 to 401 (PWIYFVTLIIIGSFFVLNLVL). The Cytoplasmic portion of the chain corresponds to 402–524 (GVLSGEFSKE…RKCRAAVKSN (123 aa)). The segment at 428–445 (QQLEEDLKGYLDWITQAE) is AID/alpha-interaction domain; mediates interaction with the beta subunit. The tract at residues 449 to 481 (PENEDEGMDEEKPRNMSMPTSETESVNTENVAG) is disordered. Over residues 465–478 (SMPTSETESVNTEN) the composition is skewed to polar residues. Phosphoserine is present on serine 469. Threonine 476 carries the phosphothreonine modification. The stretch at 510 to 756 (NRFCRRKCRA…VFLAIAVDNL (247 aa)) is one II repeat. The chain crosses the membrane as a helical span at residues 525-543 (VFYWLVIFLVFLNTLTIAS). The Extracellular segment spans residues 544 to 554 (EHYNQPNWLTE). A helical membrane pass occupies residues 555-575 (VQDTANKALLALFTAEMLLKM). At 576 to 586 (YSLGLQAYFVS) the chain is on the cytoplasmic side. Residues 587–606 (LFNRFDCFVVCGGILETILV) form a helical membrane-spanning segment. The Extracellular portion of the chain corresponds to 607–615 (ETKIMSPLG). Residues 616 to 634 (ISVLRCVRLLRIFKITRYW) form a helical membrane-spanning segment. Topologically, residues 635 to 653 (NSLSNLVASLLNSVRSIAS) are cytoplasmic. A helical membrane pass occupies residues 654-673 (LLLLLFLFIIIFSLLGMQLF). Residues 674-693 (GGKFNFDEMQTRRSTFDNFP) lie on the Extracellular side of the membrane. Positions 694-715 (QSLLTVFQILTGEDWNSVMYDG) form an intramembrane region, pore-forming. Residues 704-707 (TGED) carry the Selectivity filter of repeat II motif. Glutamate 706 serves as a coordination point for Ca(2+). The Extracellular portion of the chain corresponds to 716–725 (IMAYGGPSFP). Residues 726–745 (GMLVCIYFIILFICGNYILL) traverse the membrane as a helical segment. Residues 746–900 (NVFLAIAVDN…LQCHRIVNDT (155 aa)) are Cytoplasmic-facing. The tract at residues 764-861 (SAQKEEEEEK…EMPVGPRPRP (98 aa)) is disordered. Over residues 783–792 (SPEKKQELVE) the composition is skewed to basic and acidic residues. Phosphoserine occurs at positions 808 and 815. The tract at residues 829-876 (NENEDKSPYPNPETTGEEDEEEPEMPVGPRPRPLSELHLKEKAVPMPE) is interaction with STAC2. A compositionally biased stretch (acidic residues) spans 843 to 852 (TGEEDEEEPE). An III repeat occupies 887–1189 (NRFRLQCHRI…IFVGFVIVTF (303 aa)). Residues 901-919 (IFTNLILFFILLSSISLAA) form a helical membrane-spanning segment. At 920–931 (EDPVQHTSFRNH) the chain is on the extracellular side. Residues 932-952 (ILFYFDIVFTTIFTIEIALKI) form a helical membrane-spanning segment. The Cytoplasmic segment spans residues 953–987 (LGNADYVFTSIFTLEIILKMTAYGAFLHKGSFCRN). The chain crosses the membrane as a helical span at residues 988–1006 (YFNILDLLVVSVSLISFGI). The Extracellular portion of the chain corresponds to 1007–1013 (QSSAINV). The chain crosses the membrane as a helical span at residues 1014 to 1032 (VKILRVLRVLRPLRAINRA). Residues 1033–1051 (KGLKHVVQCVFVAIRTIGN) lie on the Cytoplasmic side of the membrane. The chain crosses the membrane as a helical span at residues 1052–1071 (IVIVTTLLQFMFACIGVQLF). The Extracellular segment spans residues 1072-1121 (KGKLYTCSDSSKQTEAECKGNYITYKDGEVDHPIIQPRSWENSKFDFDNV). Cysteines 1078 and 1089 form a disulfide. Residues 1109-1198 (RSWENSKFDF…FQEQGEQEYK (90 aa)) are dihydropyridine binding. The pore-forming intramembrane region spans 1122–1142 (LAAMMALFTVSTFEGWPELLY). The Selectivity filter of repeat III signature appears at 1133–1136 (TFEG). Glutamate 1135 contributes to the Ca(2+) binding site. Residues 1143-1159 (RSIDSHTEDKGPIYNYR) lie on the Extracellular side of the membrane. The helical transmembrane segment at 1160-1181 (VEISIFFIIYIIIIAFFMMNIF) threads the bilayer. Over 1182–1239 (VGFVIVTFQEQGEQEYKNCELDKNQRQCVEYALKARPLRRYIPKNQHQYKVWYVVNST) the chain is Cytoplasmic. An IV repeat occupies 1226 to 1527 (NQHQYKVWYV…LFVAVIMDNF (302 aa)). The helical transmembrane segment at 1240 to 1261 (YFEYLMFVLILLNTICLAMQHY) threads the bilayer. Topologically, residues 1262 to 1269 (GQSCLFKI) are extracellular. Residues 1270–1291 (AMNILNMLFTGLFTVEMILKLI) traverse the membrane as a helical segment. The Cytoplasmic segment spans residues 1292–1301 (AFKPKGYFSD). The helical transmembrane segment at 1302–1321 (PWNVFDFLIVIGSIIDVILS) threads the bilayer. At 1322–1372 (ETNHYFCDAWNTFDALIVVGSIVDIAITEVNPAEHTQCSPSMNAEENSRIS) the chain is on the extracellular side. The chain crosses the membrane as a helical span at residues 1373 to 1391 (ITFFRLFRVMRLVKLLSRG). Topologically, residues 1392–1409 (EGIRTLLWTFIKSFQALP) are cytoplasmic. The helical transmembrane segment at 1410–1430 (YVALLIVMLFFIYAVIGMQVF) threads the bilayer. Residues 1431–1452 (GKIALNDTTEINRNNNFQTFPQ) lie on the Extracellular side of the membrane. Asparagine 1436 is a glycosylation site (N-linked (GlcNAc...) asparagine). Residues 1453–1471 (AVLLLFRCATGEAWQDIML) constitute an intramembrane region (pore-forming). The short motif at 1462-1465 (TGEA) is the Selectivity filter of repeat IV element. The Extracellular segment spans residues 1472–1499 (ACMPGKKCAPESEPSNSTEGETPCGSSF). A dihydropyridine binding region spans residues 1478 to 1546 (KCAPESEPSN…LGPHHLDEFK (69 aa)). Cysteines 1479 and 1495 form a disulfide. An N-linked (GlcNAc...) asparagine glycan is attached at asparagine 1487. Residues 1492–1534 (ETPCGSSFAVFYFISFYMLCAFLIINLFVAVIMDNFDYLTRDW) form a phenylalkylamine binding region. A helical transmembrane segment spans residues 1500–1524 (AVFYFISFYMLCAFLIINLFVAVIM). Over 1525–2221 (DNFDYLTRDW…QDSRVYVSSL (697 aa)) the chain is Cytoplasmic. Residues 1659–1686 (DEVTVGKFYATFLIQEYFRKFKKRKEQG) are important for interaction with STAC1, STAC2 and STAC3. The calmodulin-binding IQ region stretch occupies residues 1665 to 1685 (KFYATFLIQEYFRKFKKRKEQ). Residues 1699-1718 (LQAGLRTLHDIGPEIRRAIS) are important for localization in at the junctional membrane. 2 positions are modified to phosphoserine: serine 1718 and serine 1739. A disordered region spans residues 1778-1847 (INKAGSSQGD…TVEGHGPPLS (70 aa)). Residues 1799–1811 (STFTPSSYSSTGS) are compositionally biased toward polar residues. Over residues 1812–1822 (NANINNANNTA) the composition is skewed to low complexity. The residue at position 1981 (serine 1981) is a Phosphoserine; by PKA. Disordered stretches follow at residues 2029–2063 (ASFPRPFATPPATPGSRGWPPQPVPTLRLEGVESS) and 2186–2221 (AGQDRAGGEEDAGCVRARGRPSEEELQDSRVYVSSL).

The protein belongs to the calcium channel alpha-1 subunit (TC 1.A.1.11) family. CACNA1C subfamily. As to quaternary structure, component of a calcium channel complex consisting of a pore-forming alpha subunit (CACNA1C) and ancillary beta, gamma and delta subunits. The channel complex contains alpha, beta, gamma and delta subunits in a 1:1:1:1 ratio, i.e. it contains only one of each type of subunit. CACNA1C channel activity is modulated by ancillary subunits, such as CACNB1, CACNB2, CACNB3, CACNA2D1 and CACNA2D4. Interacts with the gamma subunits CACNG4, CACNG6, CACNG7 and CACNG8. Interacts with CACNB1. Interacts with CACNB2. Identified in a complex with CACNA2D4 and CACNB3. Interacts with CACNB3. Interacts with CACNA2D1. Interacts with CACNA2D4. Interacts with CALM1. Interacts (via the N-terminus and the C-terminal C and IQ motifs) with CABP1; this inhibits Ca(2+)-dependent channel inactivation. The binding via the C motif is calcium independent whereas the binding via IQ requires the presence of calcium and is mutually exclusive with calmodulin binding. The binding to the cytoplasmic N-terminal domain is calcium independent but is essential for the channel modulation. Interacts (via C-terminal CDB motif) with CABP5; in a calcium-dependent manner. Interacts with CIB1; the interaction increases upon cardiomyocytes hypertrophy. Interacts with STAC2 and STAC3; this inhibits channel inactivation. (Microbial infection) Interacts with influenzavirus H1 hemagglutinin. Post-translationally, phosphorylation by PKA at Ser-1981 activates the channel. Elevated levels of blood glucose lead to increased phosphorylation by PKA. As to expression, detected throughout the brain, including hippocampus, cerebellum and amygdala, throughout the heart and vascular system, including ductus arteriosus, in urinary bladder, and in retina and sclera in the eye. Expressed in brain, heart, jejunum, ovary, pancreatic beta-cells and vascular smooth muscle. Overall expression is reduced in atherosclerotic vascular smooth muscle.

Its subcellular location is the cell membrane. It is found in the sarcolemma. It localises to the perikaryon. The protein resides in the postsynaptic density membrane. The protein localises to the cell projection. Its subcellular location is the dendrite. It is found in the T-tubule. It carries out the reaction Ca(2+)(in) = Ca(2+)(out). Its activity is regulated as follows. Inhibited by dihydropyridines (DHP), such as isradipine. Inhibited by nifedipine. Channel activity is regulated by Ca(2+) and calmodulin. Binding of STAC1, STAC2 or STAC3 to a region that overlaps with the calmodulin binding site inhibits channel inactivation by Ca(2+) and calmodulin. Binding of calmodulin or CABP1 at the same regulatory sites results in opposite effects on the channel function. Shear stress and pressure increases calcium channel activity. Its function is as follows. Pore-forming, alpha-1C subunit of the voltage-gated calcium channel that gives rise to L-type calcium currents. Mediates influx of calcium ions into the cytoplasm, and thereby triggers calcium release from the sarcoplasm. Plays an important role in excitation-contraction coupling in the heart. Required for normal heart development and normal regulation of heart rhythm. Required for normal contraction of smooth muscle cells in blood vessels and in the intestine. Essential for normal blood pressure regulation via its role in the contraction of arterial smooth muscle cells. Long-lasting (L-type) calcium channels belong to the 'high-voltage activated' (HVA) group. Functionally, pore-forming, alpha-1C subunit of the voltage-gated calcium channel that gives rise to L-type calcium currents. (Microbial infection) Acts as a receptor for Influenzavirus. May play a critical role in allowing virus entry when sialylated and expressed on lung tissues. The protein is Voltage-dependent L-type calcium channel subunit alpha-1C (CACNA1C) of Homo sapiens (Human).